Consider the following 443-residue polypeptide: MFLAQEIIRKKRNAETLSTEEIQFFVKGITNNTVSEGQIAALGMAVYFNDMNMDERIALTTAMRDSGTVLNWQSLDLNGPIIDKHSTGGVGDVISLMLGPMAAACGGYVPMISGRGLGHTGGTLDKFDAIPGYNTEPDSALFRKVVKEAGVAIIGQTGDLVPADKRFYSIRDNTATVESISLITASILSKKLAAGLDALAMDVKVGTGAFMPTYEASEELARSITAVANGAGTKTTALLTDMNQVLASCAGNALEVKEAVDFMTGAYRNPRLYEVTMGLCAEMLVLGGLASNESEARVKLNTVLDNGKAAEIFGRMVSGLGGPADFVENYSKYLPDSQIIRPVYADRSGFASAMDTRELGLAVVTLGGGRRKPGDALDYSVGLSKVCALGDEINPEQPIAFIHAQSESAFAEAEAAVKKAIHIGDSKPEKTPEIYRYIRESDL.

It belongs to the thymidine/pyrimidine-nucleoside phosphorylase family. In terms of assembly, homodimer.

It catalyses the reaction thymidine + phosphate = 2-deoxy-alpha-D-ribose 1-phosphate + thymine. The protein operates within pyrimidine metabolism; dTMP biosynthesis via salvage pathway; dTMP from thymine: step 1/2. In terms of biological role, the enzymes which catalyze the reversible phosphorolysis of pyrimidine nucleosides are involved in the degradation of these compounds and in their utilization as carbon and energy sources, or in the rescue of pyrimidine bases for nucleotide synthesis. The chain is Thymidine phosphorylase from Shewanella pealeana (strain ATCC 700345 / ANG-SQ1).